The primary structure comprises 541 residues: 2-succinyl-5-enolpyruvyl-6-hydroxy-3-cyclohexene-1-carboxylate synthase (541 aa).

This sequence belongs to the TPP enzyme family. MenD subfamily. In terms of assembly, homodimer. Mg(2+) is required as a cofactor. It depends on Mn(2+) as a cofactor. The cofactor is thiamine diphosphate.

The catalysed reaction is isochorismate + 2-oxoglutarate + H(+) = 5-enolpyruvoyl-6-hydroxy-2-succinyl-cyclohex-3-ene-1-carboxylate + CO2. The protein operates within quinol/quinone metabolism; 1,4-dihydroxy-2-naphthoate biosynthesis; 1,4-dihydroxy-2-naphthoate from chorismate: step 2/7. It functions in the pathway quinol/quinone metabolism; menaquinone biosynthesis. In terms of biological role, catalyzes the thiamine diphosphate-dependent decarboxylation of 2-oxoglutarate and the subsequent addition of the resulting succinic semialdehyde-thiamine pyrophosphate anion to isochorismate to yield 2-succinyl-5-enolpyruvyl-6-hydroxy-3-cyclohexene-1-carboxylate (SEPHCHC). This Rhodococcus jostii (strain RHA1) protein is 2-succinyl-5-enolpyruvyl-6-hydroxy-3-cyclohexene-1-carboxylate synthase.